The following is a 146-amino-acid chain: MTLRLNELAPAEGAKREHRRLGRGIGSGVGKTGGRGIKGQKSRKSGGVRPGFEGGQTAIYRRLPKFGFTSQIALKTAEVRLSELSKVEGDIVSLETLKAANVVRRDQIRARIVLSGEITRAFTVQGVALTKGAKAAIEAAGGKVEE.

Residues 1-54 (MTLRLNELAPAEGAKREHRRLGRGIGSGVGKTGGRGIKGQKSRKSGGVRPGFEG) form a disordered region. Residues 23-37 (RGIGSGVGKTGGRGI) show a composition bias toward gly residues.

Belongs to the universal ribosomal protein uL15 family. Part of the 50S ribosomal subunit.

Binds to the 23S rRNA. The chain is Large ribosomal subunit protein uL15 from Acinetobacter baumannii (strain SDF).